A 764-amino-acid chain; its full sequence is 5-methyltetrahydropteroyltriglutamate--homocysteine methyltransferase (764 aa).

Residues 17–20 (RELK) and lysine 117 contribute to the 5-methyltetrahydropteroyltri-L-glutamate site. Residues 436 to 438 (IGS) and glutamate 489 each bind L-homocysteine. L-methionine-binding positions include 436–438 (IGS) and glutamate 489. Residues 520–521 (RC) and tryptophan 566 contribute to the 5-methyltetrahydropteroyltri-L-glutamate site. Residue aspartate 604 coordinates L-homocysteine. Aspartate 604 is an L-methionine binding site. Glutamate 610 contributes to the 5-methyltetrahydropteroyltri-L-glutamate binding site. Residues histidine 646, cysteine 648, and glutamate 670 each coordinate Zn(2+). Histidine 699 acts as the Proton donor in catalysis. Cysteine 731 serves as a coordination point for Zn(2+).

This sequence belongs to the vitamin-B12 independent methionine synthase family. Zn(2+) serves as cofactor.

The catalysed reaction is 5-methyltetrahydropteroyltri-L-glutamate + L-homocysteine = tetrahydropteroyltri-L-glutamate + L-methionine. The protein operates within amino-acid biosynthesis; L-methionine biosynthesis via de novo pathway; L-methionine from L-homocysteine (MetE route): step 1/1. Functionally, catalyzes the transfer of a methyl group from 5-methyltetrahydrofolate to homocysteine resulting in methionine formation. The protein is 5-methyltetrahydropteroyltriglutamate--homocysteine methyltransferase of Baumannia cicadellinicola subsp. Homalodisca coagulata.